Reading from the N-terminus, the 144-residue chain is Bacilliredoxin SH1478 (144 aa).

This sequence belongs to the bacilliredoxin family.

The chain is Bacilliredoxin SH1478 from Staphylococcus haemolyticus (strain JCSC1435).